The primary structure comprises 760 residues: Catecholate siderophore receptor Fiu (760 aa).

A signal peptide spans 1-31 (MENNRNFPARQFHSLTFFAGLCIGITPVAQA). The 109-residue stretch at 67–175 (PVADTTRTMT…PTGSINMISK (109 aa)) folds into the TBDR plug domain. The region spanning 180-760 (DSGIDASASI…TFLLTANMHF (581 aa)) is the TBDR beta-barrel domain. Residues 743–760 (RYHPGEPRTFLLTANMHF) carry the TonB C-terminal box motif.

Belongs to the TonB-dependent receptor family.

The protein localises to the cell outer membrane. Functionally, involved in the active transport across the outer membrane of iron complexed with catecholate siderophores such as dihydroxybenzoylserine and dihydroxybenzoate. It derives its energy for transport by interacting with the trans-periplasmic membrane protein TonB. Can also transport catechol-substituted cephalosporins. Receptor for microcins M, H47 and E492. In Escherichia coli O6:H1 (strain CFT073 / ATCC 700928 / UPEC), this protein is Catecholate siderophore receptor Fiu (fiu).